The primary structure comprises 61 residues: Small ribosomal subunit protein uS14 (61 aa).

Zn(2+)-binding residues include cysteine 24, cysteine 27, cysteine 40, and cysteine 43.

This sequence belongs to the universal ribosomal protein uS14 family. Zinc-binding uS14 subfamily. In terms of assembly, part of the 30S ribosomal subunit. Contacts proteins S3 and S10. The cofactor is Zn(2+).

Binds 16S rRNA, required for the assembly of 30S particles and may also be responsible for determining the conformation of the 16S rRNA at the A site. This is Small ribosomal subunit protein uS14 from Roseiflexus castenholzii (strain DSM 13941 / HLO8).